Here is a 340-residue protein sequence, read N- to C-terminus: tRNA N6-adenosine threonylcarbamoyltransferase (340 aa).

Residues histidine 111 and histidine 115 each contribute to the Fe cation site. Substrate-binding positions include 133–137 (VVSGG), aspartate 166, glycine 179, aspartate 183, and asparagine 274. Fe cation is bound at residue aspartate 299.

The protein belongs to the KAE1 / TsaD family. It depends on Fe(2+) as a cofactor.

The protein localises to the cytoplasm. The enzyme catalyses L-threonylcarbamoyladenylate + adenosine(37) in tRNA = N(6)-L-threonylcarbamoyladenosine(37) in tRNA + AMP + H(+). Required for the formation of a threonylcarbamoyl group on adenosine at position 37 (t(6)A37) in tRNAs that read codons beginning with adenine. Is involved in the transfer of the threonylcarbamoyl moiety of threonylcarbamoyl-AMP (TC-AMP) to the N6 group of A37, together with TsaE and TsaB. TsaD likely plays a direct catalytic role in this reaction. The sequence is that of tRNA N6-adenosine threonylcarbamoyltransferase from Brachyspira hyodysenteriae (strain ATCC 49526 / WA1).